Here is a 151-residue protein sequence, read N- to C-terminus: UPF0178 protein PMI1258 (151 aa).

Belongs to the UPF0178 family.

The protein is UPF0178 protein PMI1258 of Proteus mirabilis (strain HI4320).